A 332-amino-acid chain; its full sequence is Tetraacyldisaccharide 4'-kinase (332 aa).

52–59 provides a ligand contact to ATP; sequence TLGGAGKT.

This sequence belongs to the LpxK family.

It catalyses the reaction a lipid A disaccharide + ATP = a lipid IVA + ADP + H(+). It functions in the pathway glycolipid biosynthesis; lipid IV(A) biosynthesis; lipid IV(A) from (3R)-3-hydroxytetradecanoyl-[acyl-carrier-protein] and UDP-N-acetyl-alpha-D-glucosamine: step 6/6. Its function is as follows. Transfers the gamma-phosphate of ATP to the 4'-position of a tetraacyldisaccharide 1-phosphate intermediate (termed DS-1-P) to form tetraacyldisaccharide 1,4'-bis-phosphate (lipid IVA). In Methylobacterium sp. (strain 4-46), this protein is Tetraacyldisaccharide 4'-kinase.